Reading from the N-terminus, the 408-residue chain is Phosphopentomutase (408 aa).

Positions 10, 307, 312, 348, 349, and 360 each coordinate Mn(2+).

Belongs to the phosphopentomutase family. Mn(2+) serves as cofactor.

It is found in the cytoplasm. The enzyme catalyses 2-deoxy-alpha-D-ribose 1-phosphate = 2-deoxy-D-ribose 5-phosphate. It catalyses the reaction alpha-D-ribose 1-phosphate = D-ribose 5-phosphate. It functions in the pathway carbohydrate degradation; 2-deoxy-D-ribose 1-phosphate degradation; D-glyceraldehyde 3-phosphate and acetaldehyde from 2-deoxy-alpha-D-ribose 1-phosphate: step 1/2. Isomerase that catalyzes the conversion of deoxy-ribose 1-phosphate (dRib-1-P) and ribose 1-phosphate (Rib-1-P) to deoxy-ribose 5-phosphate (dRib-5-P) and ribose 5-phosphate (Rib-5-P), respectively. This chain is Phosphopentomutase, found in Buchnera aphidicola subsp. Baizongia pistaciae (strain Bp).